The sequence spans 148 residues: MRTSYLKKIPIMNSDSDLKLQKVWIERHVDQDELSLTTTAVELKKSDEQKPVAIKSSDFIGHEELISVPVLLIPTPVVKEIDQPAVIPPVKAKPKATKKKTPVKSKPTSKSTKQTKPKQSKPKSKQVQQTKAKPTQIQTKKSNKKTRS.

The segment at 83–148 (QPAVIPPVKA…TKKSNKKTRS (66 aa)) is disordered. Basic residues-rich tracts occupy residues 92–103 (AKPKATKKKTPV) and 113–124 (KQTKPKQSKPKS).

This is an uncharacterized protein from Mycoplasma genitalium (strain ATCC 33530 / DSM 19775 / NCTC 10195 / G37) (Mycoplasmoides genitalium).